Consider the following 223-residue polypeptide: Superoxide dismutase [Mn], mitochondrial (223 aa).

Residues 1–24 (MNLIIGVAGRLLVGKNYCLNTQRL) constitute a mitochondrion transit peptide. Residues His50, His98, Asp184, and His188 each coordinate Mn(2+).

Belongs to the iron/manganese superoxide dismutase family. Homotetramer. It depends on Mn(2+) as a cofactor.

The protein localises to the mitochondrion matrix. The catalysed reaction is 2 superoxide + 2 H(+) = H2O2 + O2. Functionally, destroys superoxide anion radicals which are normally produced within the cells and which are toxic to biological systems. The protein is Superoxide dismutase [Mn], mitochondrial (sod-2) of Onchocerca volvulus.